Here is a 477-residue protein sequence, read N- to C-terminus: Sulfate adenylyltransferase subunit 1 (477 aa).

In terms of domain architecture, tr-type G spans 22 to 239 (KDMLRFITCG…TVQISHDAPL (218 aa)). Positions 31 to 38 (GSVDDGKS) are G1. 31 to 38 (GSVDDGKS) lines the GTP pocket. Positions 89–93 (GITID) are G2. The interval 110 to 113 (DCPG) is G3. GTP is bound by residues 110 to 114 (DCPGH) and 165 to 168 (NKMD). Residues 165-168 (NKMD) are G4. The tract at residues 202 to 204 (SAL) is G5.

It belongs to the TRAFAC class translation factor GTPase superfamily. Classic translation factor GTPase family. CysN/NodQ subfamily. Heterodimer composed of CysD, the smaller subunit, and CysN.

The catalysed reaction is sulfate + ATP + H(+) = adenosine 5'-phosphosulfate + diphosphate. It participates in sulfur metabolism; hydrogen sulfide biosynthesis; sulfite from sulfate: step 1/3. In terms of biological role, with CysD forms the ATP sulfurylase (ATPS) that catalyzes the adenylation of sulfate producing adenosine 5'-phosphosulfate (APS) and diphosphate, the first enzymatic step in sulfur assimilation pathway. APS synthesis involves the formation of a high-energy phosphoric-sulfuric acid anhydride bond driven by GTP hydrolysis by CysN coupled to ATP hydrolysis by CysD. The chain is Sulfate adenylyltransferase subunit 1 from Chromobacterium violaceum (strain ATCC 12472 / DSM 30191 / JCM 1249 / CCUG 213 / NBRC 12614 / NCIMB 9131 / NCTC 9757 / MK).